The primary structure comprises 66 residues: Photosystem II reaction center protein H (66 aa).

Residues 27–47 (GAVPIMTVIGLLLLVFLVILL) traverse the membrane as a helical segment.

This sequence belongs to the PsbH family. In terms of assembly, PSII is composed of 1 copy each of membrane proteins PsbA, PsbB, PsbC, PsbD, PsbE, PsbF, PsbH, PsbI, PsbJ, PsbK, PsbL, PsbM, PsbT, PsbX, PsbY, Psb30/Ycf12, peripheral proteins PsbO, CyanoQ (PsbQ), PsbU, PsbV and a large number of cofactors. It forms dimeric complexes.

The protein resides in the cellular thylakoid membrane. Its function is as follows. One of the components of the core complex of photosystem II (PSII), required for its stability and/or assembly. PSII is a light-driven water:plastoquinone oxidoreductase that uses light energy to abstract electrons from H(2)O, generating O(2) and a proton gradient subsequently used for ATP formation. It consists of a core antenna complex that captures photons, and an electron transfer chain that converts photonic excitation into a charge separation. This chain is Photosystem II reaction center protein H, found in Prochlorococcus marinus (strain MIT 9515).